Here is a 349-residue protein sequence, read N- to C-terminus: Terpene cyclase rstn5 (349 aa).

A run of 5 helical transmembrane segments spans residues 4–24 (LTPLIFLSLAMAAAVGVWGVF), 81–101 (FMVQFLANVAVIPVILNTEGA), 116–136 (GLFSQMATSAVMCPLYGFWFV), 158–178 (VVPSSVLIGYGIPALLSFDPF), and 181–201 (GLDLQIRGILAFTLYPLCISL). Asn-222 is a glycosylation site (N-linked (GlcNAc...) asparagine). Helical transmembrane passes span 228–248 (VAVGVVGMVSHLWYLGTGLTG), 271–291 (LVLLFLQIDYVITFAAMLLLA), and 309–329 (TLAVGWLFLGPGATLAAAWAL).

This sequence belongs to the membrane-bound ascI terpene cyclase family.

The protein resides in the membrane. It participates in antifungal biosynthesis. Its function is as follows. Cyclase; part of the gene cluster that mediates the biosynthesis of the tetrahydropyranyl antifungal agent restricticin that acts as an inhibitor of CYP51 and blocks the ergosterol biosynthesis. The highly reducing polyketide synthase rstn3, the short chain dehydrogenase rstn4, the cyclase rstn5, the FAD-dependent monooxygenase rstn6 and the enoylreductase rstn7 are required to generate the first stable intermediate desmethylrestrictinol. Rstn3 with rstn7 biosynthesize the first polyketide chain intermediate that is reduced by rstn4, followed by epoxidation by rstn6 before 6-endo cyclization via epoxide opening by rstn5 leads to desmethylrestrictinol. The methyltransferase rstn1 then catalyzes the C4 O-methylation of desmethylrestrictinol to produce restrictinol, and the nonribosomal peptide synthetase rstn8 catalyzes the C3 esterification of restrictinol with glycine that leads to restricticin. The chain is Terpene cyclase rstn5 from Aspergillus nomiae NRRL (strain ATCC 15546 / NRRL 13137 / CBS 260.88 / M93).